We begin with the raw amino-acid sequence, 176 residues long: Large ribosomal subunit protein uL22 (176 aa).

Residues 113–176 (VVESRPSKDQ…EISEAKGGSD (64 aa)) are disordered. Positions 136–152 (SKAAATAPAKKSSASKA) are enriched in low complexity. A compositionally biased stretch (basic and acidic residues) spans 159–176 (TKAESKTSEISEAKGGSD).

Belongs to the universal ribosomal protein uL22 family. As to quaternary structure, part of the 50S ribosomal subunit.

This protein binds specifically to 23S rRNA; its binding is stimulated by other ribosomal proteins, e.g. L4, L17, and L20. It is important during the early stages of 50S assembly. It makes multiple contacts with different domains of the 23S rRNA in the assembled 50S subunit and ribosome. Its function is as follows. The globular domain of the protein is located near the polypeptide exit tunnel on the outside of the subunit, while an extended beta-hairpin is found that lines the wall of the exit tunnel in the center of the 70S ribosome. This is Large ribosomal subunit protein uL22 from Mycobacterium ulcerans (strain Agy99).